Here is a 319-residue protein sequence, read N- to C-terminus: Acetyl esterase (319 aa).

The short motif at 91–93 is the Involved in the stabilization of the negatively charged intermediate by the formation of the oxyanion hole element; sequence HGG. Catalysis depends on residues S165, D262, and H292.

Belongs to the 'GDXG' lipolytic enzyme family. As to quaternary structure, homodimer. Interacts with MalT and MelA.

The protein resides in the cytoplasm. Displays esterase activity towards short chain fatty esters (acyl chain length of up to 8 carbons). Able to hydrolyze triacetylglycerol (triacetin) and tributyrylglycerol (tributyrin), but not trioleylglycerol (triolein) or cholesterol oleate. Negatively regulates MalT activity by antagonizing maltotriose binding. Inhibits MelA galactosidase activity. The polypeptide is Acetyl esterase (Escherichia coli (strain ATCC 8739 / DSM 1576 / NBRC 3972 / NCIMB 8545 / WDCM 00012 / Crooks)).